Consider the following 537-residue polypeptide: Woronin body major protein hexA (537 aa).

Basic and acidic residues-rich tracts occupy residues 1 to 17 (MYSV…RDAQ), 59 to 70 (DRTSHVEREDTR), and 116 to 134 (DSRV…RSEN). Disordered stretches follow at residues 1 to 20 (MYSV…QRTA), 59 to 79 (DRTS…PDPR), 116 to 200 (DSRV…KPVY), and 269 to 295 (PKPL…SRPS). Positions 135 to 144 (NAKQNKNKNN) are enriched in low complexity. Basic and acidic residues predominate over residues 272-281 (LETRKGDSFS).

It belongs to the eIF-5A family. Hex1 subfamily. Forms oligomers. Self-assembles into hexagonal rods. Binds directly or indirectly to the Woronin body tether lah.

The protein localises to the cell septum. The protein resides in the cytoplasm. Major component of Woronin bodies, fungal-specific organelles that occlude septal pores in order to separate intact from damaged compartments. HexA binds directly or indirectly to the Woronin body tether that in turn is anchored at the rim of the septal pore. Woronin bodies are important for stress resistance and virulence. In Aspergillus fumigatus (strain ATCC MYA-4609 / CBS 101355 / FGSC A1100 / Af293) (Neosartorya fumigata), this protein is Woronin body major protein hexA.